Here is a 363-residue protein sequence, read N- to C-terminus: Phosphoserine aminotransferase (363 aa).

Arg41 provides a ligand contact to L-glutamate. Pyridoxal 5'-phosphate-binding positions include Ala75 to Ser76, Trp100, Thr155, Asp175, and Gln198. Residue Lys199 is modified to N6-(pyridoxal phosphate)lysine. A pyridoxal 5'-phosphate-binding site is contributed by Asn239–Thr240.

It belongs to the class-V pyridoxal-phosphate-dependent aminotransferase family. SerC subfamily. Homodimer. It depends on pyridoxal 5'-phosphate as a cofactor.

The protein localises to the cytoplasm. The enzyme catalyses O-phospho-L-serine + 2-oxoglutarate = 3-phosphooxypyruvate + L-glutamate. It catalyses the reaction 4-(phosphooxy)-L-threonine + 2-oxoglutarate = (R)-3-hydroxy-2-oxo-4-phosphooxybutanoate + L-glutamate. It participates in amino-acid biosynthesis; L-serine biosynthesis; L-serine from 3-phospho-D-glycerate: step 2/3. Catalyzes the reversible conversion of 3-phosphohydroxypyruvate to phosphoserine and of 3-hydroxy-2-oxo-4-phosphonooxybutanoate to phosphohydroxythreonine. This is Phosphoserine aminotransferase from Streptococcus suis (strain 98HAH33).